The sequence spans 298 residues: 4-diphosphocytidyl-2-C-methyl-D-erythritol kinase (298 aa).

Lysine 15 is an active-site residue. ATP is bound at residue 100–110 (PIAAGIGGGSA). Aspartate 142 is an active-site residue.

It belongs to the GHMP kinase family. IspE subfamily.

The catalysed reaction is 4-CDP-2-C-methyl-D-erythritol + ATP = 4-CDP-2-C-methyl-D-erythritol 2-phosphate + ADP + H(+). The protein operates within isoprenoid biosynthesis; isopentenyl diphosphate biosynthesis via DXP pathway; isopentenyl diphosphate from 1-deoxy-D-xylulose 5-phosphate: step 3/6. Functionally, catalyzes the phosphorylation of the position 2 hydroxy group of 4-diphosphocytidyl-2C-methyl-D-erythritol. The polypeptide is 4-diphosphocytidyl-2-C-methyl-D-erythritol kinase (Rhodopseudomonas palustris (strain BisA53)).